A 422-amino-acid chain; its full sequence is Glutamate-1-semialdehyde 2,1-aminomutase (422 aa).

The residue at position 264 (Lys264) is an N6-(pyridoxal phosphate)lysine.

This sequence belongs to the class-III pyridoxal-phosphate-dependent aminotransferase family. HemL subfamily. In terms of assembly, homodimer. Pyridoxal 5'-phosphate serves as cofactor.

The protein localises to the cytoplasm. It catalyses the reaction (S)-4-amino-5-oxopentanoate = 5-aminolevulinate. It participates in porphyrin-containing compound metabolism; protoporphyrin-IX biosynthesis; 5-aminolevulinate from L-glutamyl-tRNA(Glu): step 2/2. The polypeptide is Glutamate-1-semialdehyde 2,1-aminomutase (Clostridium kluyveri (strain ATCC 8527 / DSM 555 / NBRC 12016 / NCIMB 10680 / K1)).